We begin with the raw amino-acid sequence, 223 residues long: Alpha-S2-casein (223 aa).

Positions 1–15 (MKLFIFTCLLAVALA) are cleaved as a signal peptide. Phosphoserine is present on residues Ser23, Ser24, Ser25, Ser28, Ser46, Ser71, Ser72, and Ser73. 2 consecutive repeats follow at residues 76-128 (FADI…TLGK) and 129-223 (EQIS…ERQA). Residues Ser132, Ser147, and Ser155 each carry the phosphoserine modification.

This sequence belongs to the alpha-casein family. In terms of tissue distribution, mammary gland specific. Secreted in milk.

It is found in the secreted. Important role in the capacity of milk to transport calcium phosphate. The chain is Alpha-S2-casein (CSN1S2) from Cavia porcellus (Guinea pig).